Reading from the N-terminus, the 562-residue chain is 2-hydroxyisobutanoyl-CoA mutase large subunit (562 aa).

(3S)-3-hydroxybutanoyl-CoA contacts are provided by residues 76-79 (YPTM), 86-88 (TMR), aspartate 117, 196-198 (TVQ), arginine 235, asparagine 240, histidine 245, and arginine 284.

This sequence belongs to the acyl-CoA mutase large subunit family. Homotetramer composed of two large substrate-binding subunits (HcmA) and two small cobalamin-binding subunits (HcmB).

The enzyme catalyses 2-hydroxyisobutanoyl-CoA = (3S)-3-hydroxybutanoyl-CoA. Its function is as follows. Together with HcmB, catalyzes the isomerization of 2-hydroxyisobutyryl-CoA and 3-hydroxybutyryl-CoA. Is specific for 2-hydroxyisobutyryl-CoA and (S)-3-hydroxybutyryl-CoA, and shows only very low activity with (R)-3-hydroxybutyryl-CoA, isobutyryl-CoA and butyryl-CoA. In vitro, can isomerize pivalyl-CoA and isovaleryl-CoA, with much lower efficiency. Plays a central role in the degradation of substrates bearing a tert-butyl moiety, such as the fuel oxygenate methyl tert-butyl ether (MTBE) and its metabolites. This is 2-hydroxyisobutanoyl-CoA mutase large subunit from Aquincola tertiaricarbonis.